Consider the following 386-residue polypeptide: TRIBOA-glucoside O-methyltransferase BX7 (386 aa).

The S-adenosyl-L-methionine site is built by G224, D248, M270, and K283. H287 functions as the Proton acceptor in the catalytic mechanism.

It belongs to the class I-like SAM-binding methyltransferase superfamily. Cation-independent O-methyltransferase family. COMT subfamily. Expressed in seedlings and newly formed crown roots. Highest expression in the scutellar node. Low to non detectable levels in cob, tassel and mature organs like husk or leaves.

The catalysed reaction is TRIBOA beta-D-glucoside + S-adenosyl-L-methionine = DIMBOA beta-D-glucoside + S-adenosyl-L-homocysteine + H(+). O-methyltransferase involved in the benzoxazinoid glucoside biosynthesis. Can use 2,4,7-trihydroxy-2H-1,4-benzoxazin-3(4H)-one 2-D-glucoside (TRIBOA-glucoside) as substrate, but not aglucone TRIBOA, caffeic acid, ferulic acid, apigenin or quercetin. This chain is TRIBOA-glucoside O-methyltransferase BX7 (BX7), found in Zea mays (Maize).